A 252-amino-acid chain; its full sequence is Major prion protein (252 aa).

Residues 1 to 22 (MANLGYWMLVLFVATWSDLGLC) form the signal peptide. Positions 23-229 (KKRPKPGGWN…ESQAYYQRGS (207 aa)) are interaction with GRB2, ERI3 and SYN1. Residues 26–104 (PKPGGWNTGG…HNQWNKPSKP (79 aa)) form a disordered region. A run of 5 repeats spans residues 51-58 (PQGGGWGQ), 59-66 (PHGGGWGQ), 67-74 (PHGGGWGQ), 75-82 (PHGGGWGQ), and 83-90 (PHGGGWGQ). The tract at residues 51–90 (PQGGGWGQPHGGGWGQPHGGGWGQPHGGGWGQPHGGGWGQ) is 5 X 8 AA tandem repeats of P-H-G-G-G-W-G-Q. Residues 52 to 92 (QGGGWGQPHGGGWGQPHGGGWGQPHGGGWGQPHGGGWGQAG) show a composition bias toward gly residues. Cu(2+)-binding residues include His-60, Gly-61, Gly-62, His-68, Gly-69, Gly-70, His-76, Gly-77, Gly-78, His-84, Gly-85, and Gly-86. A disulfide bridge connects residues Cys-178 and Cys-213. Asn-180 and Asn-196 each carry an N-linked (GlcNAc...) asparagine glycan. Ser-229 carries the GPI-anchor amidated serine lipid modification. The propeptide at 230–252 (SMVLFSSPPVILLISFLIFLIVG) is removed in mature form.

The protein belongs to the prion family. In terms of assembly, monomer and homodimer. Has a tendency to aggregate into amyloid fibrils containing a cross-beta spine, formed by a steric zipper of superposed beta-strands. Soluble oligomers may represent an intermediate stage on the path to fibril formation. Copper binding may promote oligomerization. Interacts with GRB2, APP, ERI3/PRNPIP and SYN1. Mislocalized cytosolically exposed PrP interacts with MGRN1; this interaction alters MGRN1 subcellular location and causes lysosomal enlargement. Interacts with KIAA1191.

It is found in the cell membrane. Its subcellular location is the golgi apparatus. Its primary physiological function is unclear. Has cytoprotective activity against internal or environmental stresses. May play a role in neuronal development and synaptic plasticity. May be required for neuronal myelin sheath maintenance. May play a role in iron uptake and iron homeostasis. Soluble oligomers are toxic to cultured neuroblastoma cells and induce apoptosis (in vitro). Association with GPC1 (via its heparan sulfate chains) targets PRNP to lipid rafts. Also provides Cu(2+) or Zn(2+) for the ascorbate-mediated GPC1 deaminase degradation of its heparan sulfate side chains. The sequence is that of Major prion protein (PRNP) from Ateles paniscus (Black spider monkey).